A 130-amino-acid polypeptide reads, in one-letter code: Small ribosomal subunit protein uS11 (130 aa).

This sequence belongs to the universal ribosomal protein uS11 family. Part of the 30S ribosomal subunit. Interacts with proteins S7 and S18. Binds to IF-3.

In terms of biological role, located on the platform of the 30S subunit, it bridges several disparate RNA helices of the 16S rRNA. Forms part of the Shine-Dalgarno cleft in the 70S ribosome. This Thermosynechococcus vestitus (strain NIES-2133 / IAM M-273 / BP-1) protein is Small ribosomal subunit protein uS11.